Consider the following 324-residue polypeptide: Glyoxylate/hydroxypyruvate reductase B (324 aa).

Active-site residues include arginine 237 and glutamate 266. Catalysis depends on histidine 285, which acts as the Proton donor.

This sequence belongs to the D-isomer specific 2-hydroxyacid dehydrogenase family. GhrB subfamily. In terms of assembly, homodimer.

It is found in the cytoplasm. The enzyme catalyses glycolate + NADP(+) = glyoxylate + NADPH + H(+). The catalysed reaction is (R)-glycerate + NAD(+) = 3-hydroxypyruvate + NADH + H(+). It carries out the reaction (R)-glycerate + NADP(+) = 3-hydroxypyruvate + NADPH + H(+). In terms of biological role, catalyzes the NADPH-dependent reduction of glyoxylate and hydroxypyruvate into glycolate and glycerate, respectively. The chain is Glyoxylate/hydroxypyruvate reductase B from Enterobacter sp. (strain 638).